The following is a 461-amino-acid chain: Phosphatidate cytidylyltransferase 1 (461 aa).

The disordered stretch occupies residues 1 to 67; that stretch reads MLELRHRGSC…IPEIPPSSDR (67 aa). Arg7 carries the omega-N-methylarginine modification. Basic and acidic residues predominate over residues 20–56; the sequence is PHREGEAAGGDHETESTSDKETDIDDRYGDLDSRTDS. A phosphoserine mark is found at Ser35 and Ser37. Transmembrane regions (helical) follow at residues 96 to 116, 149 to 169, 183 to 203, 230 to 250, 279 to 299, and 357 to 377; these read MISL…LLVL, FLLC…FATF, HRFI…LSLV, LVIQ…SSVI, GFIG…YVLS, and IALS…ASGF.

The protein belongs to the CDS family. As to quaternary structure, homodimer. Interacts with FOS; this interaction may enhance catalytic activity. Mg(2+) serves as cofactor. As to expression, expressed in adult tissues such as placenta, brain, small intestine, ovary, testis and prostate. Highly expressed in fetal kidney, lung and brain. Lower level in fetal liver.

It localises to the endoplasmic reticulum membrane. The enzyme catalyses a 1,2-diacyl-sn-glycero-3-phosphate + CTP + H(+) = a CDP-1,2-diacyl-sn-glycerol + diphosphate. It carries out the reaction 1-octadecanoyl-2-(5Z,8Z,11Z,14Z-eicosatetraenoyl)-sn-glycero-3-phosphate + CTP + H(+) = 1-octadecanoyl-2-(5Z,8Z,11Z,14Z-eicosatetraenoyl)-sn-glycero-3-cytidine-5'-diphosphate + diphosphate. The catalysed reaction is 1-octadecanoyl-2-(9Z,12Z-octadecadienoyl)-sn-glycero-3-phosphate + CTP + H(+) = 1-octadecanoyl-2-(9Z,12Z-octadecadienoyl)-sn-glycero-3-cytidine-5'-diphosphate + diphosphate. It catalyses the reaction 1-hexadecanoyl-2-(5Z,8Z,11Z,14Z-eicosatetraenoyl)-sn-glycero-3-phosphate + CTP + H(+) = 1-hexadecanoyl-2-(5Z,8Z,11Z,14Z-eicosatetraenoyl)-sn-glycero-3-cytidine-5'-diphosphate + diphosphate. The enzyme catalyses 1,2-di-(5Z,8Z,11Z,14Z)-eicosatetraenoyl-sn-glycero-3-phosphate + CTP + H(+) = 1,2-di-(5Z,8Z,11Z,14Z-eicosatetraenoyl)-sn-glycero-3-cytidine-5'-diphosphate + diphosphate. It carries out the reaction 1-octadecanoyl-2-(9Z-octadecenoyl)-sn-glycero-3-phosphate + CTP + H(+) = 1-octadecanoyl-2-(9Z-octadecenoyl)-sn-glycero-3-cytidine-5'-diphosphate + diphosphate. The catalysed reaction is 1-octadecanoyl-2-(4Z,7Z,10Z,13Z,16Z,19Z-docosahexaenoyl)-sn-glycero-3-phosphate + CTP + H(+) = 1-octadecanoyl-2-(4Z,7Z,10Z,13Z,16Z,19Z-docosahexaenoyl)-sn-glycero-3-cytidine-5'-diphosphate + diphosphate. It catalyses the reaction 1,2-di-(9Z,12Z-octadecadienoyl)-sn-glycero-3-phosphate + CTP + H(+) = 1,2-di-(9Z,12Z-octadecadienoyl)-sn-glycero-3-cytidine-5'-diphosphate + diphosphate. The enzyme catalyses 1,2-di-(9Z-octadecenoyl)-sn-glycero-3-phosphate + CTP + H(+) = 1,2-di-(9Z-octadecenoyl)-sn-glycero-3-cytidine-5'-diphosphate + diphosphate. Its pathway is phospholipid metabolism; CDP-diacylglycerol biosynthesis; CDP-diacylglycerol from sn-glycerol 3-phosphate: step 3/3. With respect to regulation, inhibited by its anionic phospholipid end products, with phosphatidylinositol-(4,5)- bisphosphate showing the strongest inhibition. In terms of biological role, catalyzes the conversion of phosphatidic acid (PA) to CDP-diacylglycerol (CDP-DAG), an essential intermediate in the synthesis of phosphatidylglycerol, cardiolipin and phosphatidylinositol. Exhibits almost no acyl chain preference for PA, showing no discrimination for the sn-1/sn-2 acyl chain composition of PAs. Plays an important role in regulating the growth of lipid droplets which are storage organelles at the center of lipid and energy homeostasis. Positively regulates the differentiation and development of adipocytes. This is Phosphatidate cytidylyltransferase 1 from Homo sapiens (Human).